A 284-amino-acid polypeptide reads, in one-letter code: L-ribulose-5-phosphate 3-epimerase UlaE (284 aa).

It belongs to the L-ribulose-5-phosphate 3-epimerase family.

It carries out the reaction L-ribulose 5-phosphate = L-xylulose 5-phosphate. It participates in cofactor degradation; L-ascorbate degradation; D-xylulose 5-phosphate from L-ascorbate: step 3/4. Catalyzes the isomerization of L-xylulose-5-phosphate to L-ribulose-5-phosphate. Is involved in the anaerobic L-ascorbate utilization. This is L-ribulose-5-phosphate 3-epimerase UlaE from Shigella boydii serotype 18 (strain CDC 3083-94 / BS512).